The following is a 225-amino-acid chain: MNSIEFPLLDRTTQNSVISTTLNDLSNWSRLSSLWPLLYGTSCCFIEFASLIGSRFDFDRYGLVPRSSPRQADLILTAGTVTMKMAPSLVRLYEQMPEPKYVIAMGACTITGGMFSTDSYSTVRGVDKLIPVDVYLPGCPPKPEAVIDAITKLRKKISREIYEDRIRSQQGNRCFTTNHKFLFVRSTHTGNYDQELLYQPSSTSEIPTETFFKYKSSVSSRELVN.

The [4Fe-4S] cluster site is built by Cys-43, Cys-44, Cys-108, and Cys-139.

The protein belongs to the complex I 20 kDa subunit family. In terms of assembly, NDH is composed of at least 16 different subunits, 5 of which are encoded in the nucleus. [4Fe-4S] cluster serves as cofactor.

The protein resides in the plastid. It is found in the chloroplast thylakoid membrane. The catalysed reaction is a plastoquinone + NADH + (n+1) H(+)(in) = a plastoquinol + NAD(+) + n H(+)(out). The enzyme catalyses a plastoquinone + NADPH + (n+1) H(+)(in) = a plastoquinol + NADP(+) + n H(+)(out). Its function is as follows. NDH shuttles electrons from NAD(P)H:plastoquinone, via FMN and iron-sulfur (Fe-S) centers, to quinones in the photosynthetic chain and possibly in a chloroplast respiratory chain. The immediate electron acceptor for the enzyme in this species is believed to be plastoquinone. Couples the redox reaction to proton translocation, and thus conserves the redox energy in a proton gradient. The protein is NAD(P)H-quinone oxidoreductase subunit K, chloroplastic of Carica papaya (Papaya).